We begin with the raw amino-acid sequence, 338 residues long: S-adenosylmethionine:tRNA ribosyltransferase-isomerase (338 aa).

Belongs to the QueA family. Monomer.

It localises to the cytoplasm. The enzyme catalyses 7-aminomethyl-7-carbaguanosine(34) in tRNA + S-adenosyl-L-methionine = epoxyqueuosine(34) in tRNA + adenine + L-methionine + 2 H(+). It functions in the pathway tRNA modification; tRNA-queuosine biosynthesis. Functionally, transfers and isomerizes the ribose moiety from AdoMet to the 7-aminomethyl group of 7-deazaguanine (preQ1-tRNA) to give epoxyqueuosine (oQ-tRNA). The sequence is that of S-adenosylmethionine:tRNA ribosyltransferase-isomerase from Francisella tularensis subsp. tularensis (strain WY96-3418).